The sequence spans 428 residues: MRYTKSEEAMKVAETLMPGGVNSPVRAFKSVDTPAIFMDHGKGSKIYDIDGNEYIDYVLSWGPLILGHRDPQVISHLHEAIDKGTSFGASTLLENKLAQLVIDRVPSIEKVRMVSSGTEATLDTLRLARGYTGRNKIVKFEGCYHGHSDSLLIKAGSGVATLGLPDSPGVPEGIAKNTITVPYNDLDALKIAFEKFGNDIAGVIVEPVAGNMGVVPPIEGFLQGLRDITTEYGALLIFDEVMTGFRVGYHCAQGYFGVTPDLTCLGKVIGGGLPVGAFGGKKEIMDHIAPLGNIYQAGTLSGNPLAMTSGYETLSQLTPETYEYFNMLGDILEDGLKRVFAKHNVPITVNRAGSMIGYFLNEGPVTNFEQANKSDLKLFAEMYREMAKEGVFLPPSQFEGTFLSTAHTKEDIEKTIQAFDTALSRIVK.

Lysine 267 carries the post-translational modification N6-(pyridoxal phosphate)lysine.

The protein belongs to the class-III pyridoxal-phosphate-dependent aminotransferase family. HemL subfamily. In terms of assembly, homodimer. The cofactor is pyridoxal 5'-phosphate.

Its subcellular location is the cytoplasm. The enzyme catalyses (S)-4-amino-5-oxopentanoate = 5-aminolevulinate. It participates in porphyrin-containing compound metabolism; protoporphyrin-IX biosynthesis; 5-aminolevulinate from L-glutamyl-tRNA(Glu): step 2/2. This is Glutamate-1-semialdehyde 2,1-aminomutase 1 (hemL1) from Staphylococcus aureus (strain NCTC 8325 / PS 47).